A 157-amino-acid polypeptide reads, in one-letter code: DNA-binding protein MNB1B (157 aa).

Disordered stretches follow at residues 1–45 (MKGA…KRAP), 59–87 (FKEK…SESD), and 109–157 (YNKG…DDDE). Basic and acidic residues-rich tracts occupy residues 10-27 (AKAD…EKPA) and 76-87 (AGDRWKSLSESD). The HMG box DNA-binding region spans 41-110 (PKRAPSAFFV…EYNKAIAAYN (70 aa)). Composition is skewed to acidic residues over residues 124 to 133 (EEEEEDEEES) and 141 to 157 (NDED…DDDE). The residue at position 149 (S149) is a Phosphoserine; by CK2.

In terms of tissue distribution, expressed in all tissues examined.

Its subcellular location is the nucleus. Functionally, recognizes an AAGG motif at the MNF1-binding site. This Zea mays (Maize) protein is DNA-binding protein MNB1B (MNB1B).